The sequence spans 342 residues: Succinylglutamate desuccinylase (342 aa).

The Zn(2+) site is built by histidine 63, glutamate 66, and histidine 155. The active site involves glutamate 219.

It belongs to the AspA/AstE family. Succinylglutamate desuccinylase subfamily. Zn(2+) is required as a cofactor.

It catalyses the reaction N-succinyl-L-glutamate + H2O = L-glutamate + succinate. It participates in amino-acid degradation; L-arginine degradation via AST pathway; L-glutamate and succinate from L-arginine: step 5/5. Transforms N(2)-succinylglutamate into succinate and glutamate. This is Succinylglutamate desuccinylase from Vibrio cholerae serotype O1 (strain ATCC 39315 / El Tor Inaba N16961).